The following is a 741-amino-acid chain: Double-stranded RNA-specific editase 1 (741 aa).

The disordered stretch occupies residues 1–79 (MDIEDEENMS…RRKTPGPVLP (79 aa)). A Phosphoserine modification is found at serine 26. Gly residues predominate over residues 33 to 49 (PGPGEGSQLSNGGGGGP). Positions 63-73 (SKYRLKKRRKT) are enriched in basic residues. The 67-residue stretch at 78-144 (LPKNALMQLN…AEKALRSFVQ (67 aa)) folds into the DRBM 1 domain. Interaction with substrate RNA regions lie at residues 83 to 88 (LMQLNE) and 104 to 105 (VH). A Phosphoserine modification is found at serine 149. In terms of domain architecture, DRBM 2 spans 231-298 (PSGKNPVMIL…AQSALAAIFN (68 aa)). Interaction with substrate RNA stretches follow at residues 237 to 242 (VMILNE) and histidine 259. The 368-residue stretch at 370–737 (SVSTGTKCIN…VEKPTEQDQF (368 aa)) folds into the A to I editase domain. A Zn(2+)-binding site is contributed by histidine 394. Glutamate 396 acts as the Proton donor in catalysis. Residues arginine 400 and arginine 401 each contribute to the 1D-myo-inositol hexakisphosphate site. Cysteine 451 lines the Zn(2+) pocket. The segment at 486 to 518 (RPPGLLSDPSTSTFQGAGTTEPADRHPNRKARG) is disordered. The segment covering 493–503 (DPSTSTFQGAG) has biased composition (polar residues). Cysteine 556 lines the Zn(2+) pocket. Residues lysine 559, arginine 562, lysine 669, lysine 702, lysine 712, and lysine 730 each coordinate 1D-myo-inositol hexakisphosphate.

As to quaternary structure, homodimer. Homodimerization is essential for its catalytic activity. Can form heterodimers with isoform 5 of ADAR/ADAR1. It depends on 1D-myo-inositol hexakisphosphate as a cofactor. Highly expressed in brain and heart and at lower levels in placenta. Fair expression in lung, liver and kidney. Detected in brain, heart, kidney, lung and liver (at protein level). As to expression, highly expressed in hippocampus and colon. Expressed in pediatric astrocytomas and the protein has a decreased RNA-editing activity. The decrease in RNA editing correlates with the grade of malignancy of the tumors, with the high grade tumors showing lower editing is seen.

It localises to the nucleus. The protein localises to the nucleolus. It carries out the reaction adenosine in double-stranded RNA + H2O + H(+) = inosine in double-stranded RNA + NH4(+). Catalyzes the hydrolytic deamination of adenosine to inosine in double-stranded RNA (dsRNA) referred to as A-to-I RNA editing. This may affect gene expression and function in a number of ways that include mRNA translation by changing codons and hence the amino acid sequence of proteins; pre-mRNA splicing by altering splice site recognition sequences; RNA stability by changing sequences involved in nuclease recognition; genetic stability in the case of RNA virus genomes by changing sequences during viral RNA replication; and RNA structure-dependent activities such as microRNA production or targeting or protein-RNA interactions. Can edit both viral and cellular RNAs and can edit RNAs at multiple sites (hyper-editing) or at specific sites (site-specific editing). Its cellular RNA substrates include: bladder cancer-associated protein (BLCAP), neurotransmitter receptors for glutamate (GRIA2 and GRIK2) and serotonin (HTR2C), GABA receptor (GABRA3) and potassium voltage-gated channel (KCNA1). Site-specific RNA editing of transcripts encoding these proteins results in amino acid substitutions which consequently alter their functional activities. Edits GRIA2 at both the Q/R and R/G sites efficiently but converts the adenosine in hotspot1 much less efficiently. Can exert a proviral effect towards human immunodeficiency virus type 1 (HIV-1) and enhances its replication via both an editing-dependent and editing-independent mechanism. The former involves editing of adenosines in the 5'UTR while the latter occurs via suppression of EIF2AK2/PKR activation and function. Can inhibit cell proliferation and migration and can stimulate exocytosis. In terms of biological role, has a lower catalytic activity than isoform 2. Its function is as follows. Has a higher catalytic activity than isoform 1. In Homo sapiens (Human), this protein is Double-stranded RNA-specific editase 1.